A 220-amino-acid polypeptide reads, in one-letter code: Phosphatidylserine decarboxylase proenzyme (220 aa).

Ser-189 acts as the Schiff-base intermediate with substrate; via pyruvic acid in catalysis. Ser-189 is subject to Pyruvic acid (Ser); by autocatalysis.

The protein belongs to the phosphatidylserine decarboxylase family. PSD-A subfamily. Heterodimer of a large membrane-associated beta subunit and a small pyruvoyl-containing alpha subunit. The cofactor is pyruvate. Post-translationally, is synthesized initially as an inactive proenzyme. Formation of the active enzyme involves a self-maturation process in which the active site pyruvoyl group is generated from an internal serine residue via an autocatalytic post-translational modification. Two non-identical subunits are generated from the proenzyme in this reaction, and the pyruvate is formed at the N-terminus of the alpha chain, which is derived from the carboxyl end of the proenzyme. The post-translation cleavage follows an unusual pathway, termed non-hydrolytic serinolysis, in which the side chain hydroxyl group of the serine supplies its oxygen atom to form the C-terminus of the beta chain, while the remainder of the serine residue undergoes an oxidative deamination to produce ammonia and the pyruvoyl prosthetic group on the alpha chain.

It localises to the cell membrane. The enzyme catalyses a 1,2-diacyl-sn-glycero-3-phospho-L-serine + H(+) = a 1,2-diacyl-sn-glycero-3-phosphoethanolamine + CO2. It participates in phospholipid metabolism; phosphatidylethanolamine biosynthesis; phosphatidylethanolamine from CDP-diacylglycerol: step 2/2. Catalyzes the formation of phosphatidylethanolamine (PtdEtn) from phosphatidylserine (PtdSer). The protein is Phosphatidylserine decarboxylase proenzyme of Pelobacter propionicus (strain DSM 2379 / NBRC 103807 / OttBd1).